We begin with the raw amino-acid sequence, 352 residues long: Ion-translocating oxidoreductase complex subunit D (352 aa).

Helical transmembrane passes span 20–40, 42–62, 78–109, 123–143, and 148–168; these read IMLL…WFFG, GTLV…ALVL, ALLT…VIIA, PAMI…TSWL, and IAVN…GHTA. FMN phosphoryl threonine is present on Thr187. The next 5 helical transmembrane spans lie at 214–234, 242–262, 267–287, 301–321, and 322–342; these read ILAG…GVWL, WHIP…GWLF, LAAP…FFIL, LIFG…GGYP, and DGVA…DYYT.

Belongs to the NqrB/RnfD family. In terms of assembly, the complex is composed of six subunits: RsxA, RsxB, RsxC, RsxD, RsxE and RsxG. FMN serves as cofactor.

The protein resides in the cell inner membrane. Part of a membrane-bound complex that couples electron transfer with translocation of ions across the membrane. Required to maintain the reduced state of SoxR. The chain is Ion-translocating oxidoreductase complex subunit D from Shigella dysenteriae serotype 1 (strain Sd197).